We begin with the raw amino-acid sequence, 291 residues long: Phytanoyl-CoA dioxygenase domain-containing protein 1 (291 aa).

Residue threonine 55 is modified to Phosphothreonine. 2-oxoglutarate contacts are provided by residues lysine 102, methionine 141, 156–158 (HQD), and tryptophan 174. Histidine 156 and aspartate 158 together coordinate Fe cation. A Fe cation-binding site is contributed by histidine 246. Serine 248 and arginine 257 together coordinate 2-oxoglutarate.

The protein belongs to the PhyH family. PHYHD1 subfamily. Fe cation is required as a cofactor.

Its function is as follows. 2-oxoglutarate(2OG)-dependent dioxygenase that catalyzes the conversion of 2-oxoglutarate to succinate and CO(2) in an iron-dependent manner. However, does not couple 2OG turnover to the hydroxylation of acyl-coenzyme A derivatives, implying that it is not directly involved in phytanoyl coenzyme-A metabolism. Does not show detectable activity towards fatty acid CoA thioesters. This is Phytanoyl-CoA dioxygenase domain-containing protein 1 from Mus musculus (Mouse).